A 234-amino-acid polypeptide reads, in one-letter code: Inner membrane protein YbhL (234 aa).

Residues 1–23 (MDRFPRSDSIVQPRAGLQTYMAQ) are Periplasmic-facing. A helical transmembrane segment spans residues 24-44 (VYGWMTVGLLLTAFVAWYAAN). Residues 45-56 (SAAVMELLFTNR) are Cytoplasmic-facing. The chain crosses the membrane as a helical span at residues 57 to 77 (VFLIGLIIAQLALVIVLSAMI). The Periplasmic portion of the chain corresponds to 78–79 (QK). A helical membrane pass occupies residues 80 to 100 (LSAGVTTMLFMLYSALTGLTL). At 101-102 (SS) the chain is on the cytoplasmic side. The helical transmembrane segment at 103 to 123 (IFIVYTAASIASTFVVTAGMF) threads the bilayer. Residues 124-136 (GAMSLYGYTTKRD) lie on the Periplasmic side of the membrane. A helical transmembrane segment spans residues 137 to 157 (LSGFGNMLFMALIGIVLASLV). At 158–163 (NFWLKS) the chain is on the cytoplasmic side. Residues 164–184 (EALMWAVTYIGVIVFVGLTAY) traverse the membrane as a helical segment. Residues 185 to 206 (DTQKLKNMGEQIDTRDTSNLRK) lie on the Periplasmic side of the membrane. Residues 207 to 227 (YSILGALTLYLDFINLFLMLL) traverse the membrane as a helical segment. Residues 228 to 234 (RIFGNRR) lie on the Cytoplasmic side of the membrane.

Belongs to the BI1 family.

The protein resides in the cell inner membrane. The polypeptide is Inner membrane protein YbhL (ybhL) (Escherichia coli (strain K12)).